A 2605-amino-acid chain; its full sequence is Protein ABERRANT POLLEN TRANSMISSION 1 (2605 aa).

The signal sequence occupies residues Met1–Ala43. Residues Ser137 to Gly158 are disordered. N-linked (GlcNAc...) asparagine glycosylation is found at Asn232, Asn320, Asn348, Asn516, Asn587, Asn628, Asn696, Asn779, Asn1171, Asn1318, and Asn1459. Positions Ser305–Ser326 are disordered. The segment covering Glu311–Ser326 has biased composition (basic and acidic residues). A disordered region spans residues Met1761 to Gly1818. Low complexity predominate over residues Ser1768–Gln1781. Positions Ile1782 to Ser1812 are enriched in polar residues. Asn1791, Asn1810, Asn2003, Asn2280, and Asn2291 each carry an N-linked (GlcNAc...) asparagine glycan. 2 disordered regions span residues Val2269–Asp2312 and Glu2332–Lys2361. Positions Thr2281–Ala2300 are enriched in polar residues. Basic and acidic residues-rich tracts occupy residues Pro2303–Asp2312 and Asp2343–Lys2361. N-linked (GlcNAc...) asparagine glycosylation is found at Asn2468 and Asn2564. The interval Thr2574–Asp2605 is disordered.

Belongs to the SABRE family. Mature pollen-specific.

The protein localises to the secreted. The protein resides in the golgi apparatus. Functionally, may be involved in membrane trafficking. Required for tip growth in pollen tubes and root hairs. The polypeptide is Protein ABERRANT POLLEN TRANSMISSION 1 (Zea mays (Maize)).